Consider the following 204-residue polypeptide: Peptide deformylase (204 aa).

Positions 131 and 174 each coordinate Fe cation. Residue Glu175 is part of the active site. His178 is a Fe cation binding site.

It belongs to the polypeptide deformylase family. It depends on Fe(2+) as a cofactor.

It catalyses the reaction N-terminal N-formyl-L-methionyl-[peptide] + H2O = N-terminal L-methionyl-[peptide] + formate. Functionally, removes the formyl group from the N-terminal Met of newly synthesized proteins. Requires at least a dipeptide for an efficient rate of reaction. N-terminal L-methionine is a prerequisite for activity but the enzyme has broad specificity at other positions. This is Peptide deformylase from Streptococcus agalactiae serotype III (strain NEM316).